The following is a 261-amino-acid chain: Phosphonates import ATP-binding protein PhnC (261 aa).

Positions 15–257 (LCLENTSAVY…LERSAIPPKR (243 aa)) constitute an ABC transporter domain. 48-55 (GPSGSGKS) is an ATP binding site.

The protein belongs to the ABC transporter superfamily. Phosphonates importer (TC 3.A.1.9.1) family. The complex is composed of two ATP-binding proteins (PhnC), two transmembrane proteins (PhnE) and a solute-binding protein (PhnD).

It localises to the cell inner membrane. It carries out the reaction phosphonate(out) + ATP + H2O = phosphonate(in) + ADP + phosphate + H(+). Part of the ABC transporter complex PhnCDE involved in phosphonates import. Responsible for energy coupling to the transport system. The protein is Phosphonates import ATP-binding protein PhnC of Hyphomonas neptunium (strain ATCC 15444).